Reading from the N-terminus, the 443-residue chain is Probable 26S proteasome regulatory subunit 4 (443 aa).

The segment at Met1–Pro53 is disordered. Residues Gly12–Glu29 are compositionally biased toward basic and acidic residues. Gly229–Thr236 is a binding site for ATP.

Belongs to the AAA ATPase family.

The protein resides in the cytoplasm. Its subcellular location is the nucleus. Functionally, the 26S proteasome is involved in the ATP-dependent degradation of ubiquitinated proteins. The regulatory (or ATPase) complex confers ATP dependency and substrate specificity to the 26S complex. May play a role in the degradation of microtubule severing protein mei-1. This is Probable 26S proteasome regulatory subunit 4 (rpt-2) from Caenorhabditis elegans.